Reading from the N-terminus, the 279-residue chain is Thioredoxin domain-containing protein plp1 (279 aa).

Positions 56 to 70 are enriched in basic and acidic residues; it reads RKEDTQDYNEPELHN. Positions 56–75 are disordered; the sequence is RKEDTQDYNEPELHNSNDPT. Residues 137 to 248 enclose the Thioredoxin domain; the sequence is FLTVENEREV…LEFRLLKSSA (112 aa). The segment covering 254-267 has biased composition (basic and acidic residues); sequence EESSSNKSIYHDEL. Residues 254–279 are disordered; sequence EESSSNKSIYHDELQNNQSDDSDFFE. A phosphoserine mark is found at S272 and S275.

This sequence belongs to the phosducin family.

The protein localises to the cytoplasm. The protein resides in the nucleus. In terms of biological role, inhibits early G-protein signaling events following pheromone stimulation. May help create heterodimerizable beta-tubulin by facilitating the efficient transfer of nascent beta-tubulin polypeptides to the folding apparatus. The sequence is that of Thioredoxin domain-containing protein plp1 (plp1) from Schizosaccharomyces pombe (strain 972 / ATCC 24843) (Fission yeast).